The primary structure comprises 547 residues: Chaperonin GroEL (547 aa).

ATP-binding positions include 30 to 33, Lys51, 87 to 91, Gly415, 479 to 481, and Asp495; these read TLGP, DGTTT, and NAA.

This sequence belongs to the chaperonin (HSP60) family. Forms a cylinder of 14 subunits composed of two heptameric rings stacked back-to-back. Interacts with the co-chaperonin GroES.

The protein localises to the cytoplasm. It catalyses the reaction ATP + H2O + a folded polypeptide = ADP + phosphate + an unfolded polypeptide.. Functionally, together with its co-chaperonin GroES, plays an essential role in assisting protein folding. The GroEL-GroES system forms a nano-cage that allows encapsulation of the non-native substrate proteins and provides a physical environment optimized to promote and accelerate protein folding. This Pseudomonas paraeruginosa (strain DSM 24068 / PA7) (Pseudomonas aeruginosa (strain PA7)) protein is Chaperonin GroEL.